Reading from the N-terminus, the 90-residue chain is U7-theraphotoxin-Hhn1a 8 (90 aa).

A signal peptide spans 1–19 (MKTAIFTVVLALAVFAVLS). The propeptide occupies 20 to 50 (FGWEANEKALSEEFTELIHEKGAASETEARE). 3 disulfide bridges follow: cysteine 51-cysteine 65, cysteine 58-cysteine 70, and cysteine 64-cysteine 81.

The protein belongs to the neurotoxin 10 (Hwtx-1) family. 13 (Hntx-13) subfamily. Expressed by the venom gland.

The protein localises to the secreted. In terms of biological role, ion channel inhibitor. The polypeptide is U7-theraphotoxin-Hhn1a 8 (Cyriopagopus hainanus (Chinese bird spider)).